A 465-amino-acid polypeptide reads, in one-letter code: Ribulose bisphosphate carboxylase large chain (465 aa).

Lysine 4 is subject to N6,N6,N6-trimethyllysine. Asparagine 113 and threonine 163 together coordinate substrate. Residue lysine 165 is the Proton acceptor of the active site. Lysine 167 serves as a coordination point for substrate. Mg(2+) is bound by residues lysine 191, aspartate 193, and glutamate 194. Position 191 is an N6-carboxylysine (lysine 191). Histidine 284 acts as the Proton acceptor in catalysis. Arginine 285, histidine 317, and serine 369 together coordinate substrate.

Belongs to the RuBisCO large chain family. Type I subfamily. Heterohexadecamer of 8 large chains and 8 small chains; disulfide-linked. The disulfide link is formed within the large subunit homodimers. The cofactor is Mg(2+). In terms of processing, the disulfide bond which can form in the large chain dimeric partners within the hexadecamer appears to be associated with oxidative stress and protein turnover.

The protein localises to the plastid. The protein resides in the chloroplast. The catalysed reaction is 2 (2R)-3-phosphoglycerate + 2 H(+) = D-ribulose 1,5-bisphosphate + CO2 + H2O. It carries out the reaction D-ribulose 1,5-bisphosphate + O2 = 2-phosphoglycolate + (2R)-3-phosphoglycerate + 2 H(+). Functionally, ruBisCO catalyzes two reactions: the carboxylation of D-ribulose 1,5-bisphosphate, the primary event in carbon dioxide fixation, as well as the oxidative fragmentation of the pentose substrate in the photorespiration process. Both reactions occur simultaneously and in competition at the same active site. The protein is Ribulose bisphosphate carboxylase large chain of Bursera inaguensis (Elaphrium inaguense).